A 143-amino-acid polypeptide reads, in one-letter code: Large ribosomal subunit protein uL11 (143 aa).

It belongs to the universal ribosomal protein uL11 family. Part of the ribosomal stalk of the 50S ribosomal subunit. Interacts with L10 and the large rRNA to form the base of the stalk. L10 forms an elongated spine to which L12 dimers bind in a sequential fashion forming a multimeric L10(L12)X complex. In terms of processing, one or more lysine residues are methylated.

Its function is as follows. Forms part of the ribosomal stalk which helps the ribosome interact with GTP-bound translation factors. This is Large ribosomal subunit protein uL11 from Caulobacter vibrioides (strain ATCC 19089 / CIP 103742 / CB 15) (Caulobacter crescentus).